Here is a 251-residue protein sequence, read N- to C-terminus: Indole-3-glycerol phosphate synthase (251 aa).

Polar residues predominate over residues 1-12 (MDDSSSLASPVQ). The tract at residues 1–27 (MDDSSSLASPVQSILAAARRRDPPTRR) is disordered.

This sequence belongs to the TrpC family.

The enzyme catalyses 1-(2-carboxyphenylamino)-1-deoxy-D-ribulose 5-phosphate + H(+) = (1S,2R)-1-C-(indol-3-yl)glycerol 3-phosphate + CO2 + H2O. It functions in the pathway amino-acid biosynthesis; L-tryptophan biosynthesis; L-tryptophan from chorismate: step 4/5. This is Indole-3-glycerol phosphate synthase from Halobacterium salinarum (strain ATCC 700922 / JCM 11081 / NRC-1) (Halobacterium halobium).